The sequence spans 243 residues: ATP synthase subunit a (243 aa).

7 consecutive transmembrane segments (helical) span residues 29-49, 54-74, 89-109, 114-134, 144-164, 182-202, and 208-228; these read NASL…YIGL, ILPN…VSTI, VFTI…PLGF, HIAV…AIGF, ILLP…IELF, IAGH…NIFL, and AFII…AYIF.

This sequence belongs to the ATPase A chain family. As to quaternary structure, F-type ATPases have 2 components, CF(1) - the catalytic core - and CF(0) - the membrane proton channel. CF(1) has five subunits: alpha(3), beta(3), gamma(1), delta(1), epsilon(1). CF(0) has three main subunits: a(1), b(2) and c(9-12). The alpha and beta chains form an alternating ring which encloses part of the gamma chain. CF(1) is attached to CF(0) by a central stalk formed by the gamma and epsilon chains, while a peripheral stalk is formed by the delta and b chains.

The protein localises to the cell inner membrane. Its function is as follows. Key component of the proton channel; it plays a direct role in the translocation of protons across the membrane. The protein is ATP synthase subunit a of Ehrlichia chaffeensis (strain ATCC CRL-10679 / Arkansas).